Here is a 437-residue protein sequence, read N- to C-terminus: Adenylosuccinate synthetase (437 aa).

Residues Gly13–Lys19 and Gly41–Thr43 contribute to the GTP site. Asp14 functions as the Proton acceptor in the catalytic mechanism. The Mg(2+) site is built by Asp14 and Gly41. IMP contacts are provided by residues Asp14 to Lys17, Asn39 to His42, Thr130, Arg144, Gln225, Thr240, and Arg310. His42 (proton donor) is an active-site residue. A substrate-binding site is contributed by Ala306–Arg312. Residues Arg312, Lys338–Asp340, and Ser421–Gly423 each bind GTP.

Belongs to the adenylosuccinate synthetase family. As to quaternary structure, homodimer. Mg(2+) is required as a cofactor.

The protein resides in the cytoplasm. It carries out the reaction IMP + L-aspartate + GTP = N(6)-(1,2-dicarboxyethyl)-AMP + GDP + phosphate + 2 H(+). The protein operates within purine metabolism; AMP biosynthesis via de novo pathway; AMP from IMP: step 1/2. Its function is as follows. Plays an important role in the de novo pathway of purine nucleotide biosynthesis. Catalyzes the first committed step in the biosynthesis of AMP from IMP. This is Adenylosuccinate synthetase from Psychromonas ingrahamii (strain DSM 17664 / CCUG 51855 / 37).